The primary structure comprises 407 residues: Phosphoglycerate kinase (407 aa).

Substrate-binding positions include 24–26 (DIN), Arg-39, 60–63 (HQSR), Arg-117, and Arg-157. ATP-binding positions include Glu-330 and 355-358 (GGHI).

It belongs to the phosphoglycerate kinase family.

Its subcellular location is the cytoplasm. The catalysed reaction is (2R)-3-phosphoglycerate + ATP = (2R)-3-phospho-glyceroyl phosphate + ADP. It functions in the pathway carbohydrate degradation; glycolysis; pyruvate from D-glyceraldehyde 3-phosphate: step 2/5. The chain is Phosphoglycerate kinase (pgk) from Archaeoglobus fulgidus (strain ATCC 49558 / DSM 4304 / JCM 9628 / NBRC 100126 / VC-16).